We begin with the raw amino-acid sequence, 116 residues long: Spermadhesin Z13 (116 aa).

2 cysteine pairs are disulfide-bonded: cysteine 14–cysteine 35 and cysteine 58–cysteine 79. In terms of domain architecture, CUB spans 14–115 (CGDLYGEEYG…PDFFLIFRRV (102 aa)).

It belongs to the spermadhesin family. In terms of assembly, homodimer; disulfide-linked. In terms of tissue distribution, seminal plasma.

It localises to the secreted. Its function is as follows. May be involved in the fertilization process. The sequence is that of Spermadhesin Z13 from Bos taurus (Bovine).